The primary structure comprises 215 residues: Programmed cell death protein 10 homolog (215 aa).

It belongs to the PDCD10 family. Interacts with gck-1. Expressed in pharynx, intestine, germline, vulva and excretory canals.

The protein localises to the cytoplasm. Its subcellular location is the apical cell membrane. Involved in excretory canal elongation during postembryonic development. Plays a role in promoting Golgi stability, ER integrity and vesicle transport probably by regulating the activation of Rho GTPase cdc-42. Involved in fertility. This Caenorhabditis elegans protein is Programmed cell death protein 10 homolog.